The chain runs to 197 residues: Protein FAM219B (197 aa).

Disordered regions lie at residues 1-77 and 117-142; these read MATE…HRDH and DENLVSLDSDSDGELESRYSSGYSSA. Residues Ser-14, Ser-125, and Ser-127 each carry the phosphoserine modification.

Belongs to the FAM219 family.

This chain is Protein FAM219B (Fam219b), found in Mus musculus (Mouse).